The primary structure comprises 206 residues: Protein Mabiki (206 aa).

Residues phenylalanine 54 to valine 77 form a disordered region.

Functionally, plays a role in inducing apoptosis and is involved in the repair of head patterning defects in the embryo caused by extra maternal copies of the homeotic gene bicoid. In Drosophila melanogaster (Fruit fly), this protein is Protein Mabiki.